We begin with the raw amino-acid sequence, 658 residues long: Endoplasmic reticulum mannosyl-oligosaccharide 1,2-alpha-mannosidase (658 aa).

The Cytoplasmic segment spans residues 1–50 (MYPPPAPPPAPHRDFISVTLSLGESYDNSKSRRRRSCWRKWKQLSRLQRN). The helical; Signal-anchor for type II membrane protein transmembrane segment at 51–71 (VILFVLGFLILCGFLYSLHTA) threads the bilayer. Topologically, residues 72-658 (DQWKALSGRP…AHPLPIWAPA (587 aa)) are lumenal. Ser102 is modified (phosphoserine). The disordered stretch occupies residues 123–142 (GPPHLQIRPPNTVSKDGMQD). Residue Glu289 is the Proton donor of the active site. Asp422 is a catalytic residue. Cys486 and Cys515 are oxidised to a cystine. Glu529 (proton donor) is an active-site residue. The active site involves Glu558. Thr647 is a binding site for Ca(2+).

The protein belongs to the glycosyl hydrolase 47 family. Ca(2+) is required as a cofactor.

Its subcellular location is the endoplasmic reticulum membrane. It carries out the reaction N(4)-(alpha-D-Man-(1-&gt;2)-alpha-D-Man-(1-&gt;2)-alpha-D-Man-(1-&gt;3)-[alpha-D-Man-(1-&gt;2)-alpha-D-Man-(1-&gt;3)-[alpha-D-Man-(1-&gt;2)-alpha-D-Man-(1-&gt;6)]-alpha-D-Man-(1-&gt;6)]-beta-D-Man-(1-&gt;4)-beta-D-GlcNAc-(1-&gt;4)-beta-D-GlcNAc)-L-asparaginyl-[protein] (N-glucan mannose isomer 9A1,2,3B1,2,3) + 4 H2O = N(4)-(alpha-D-Man-(1-&gt;3)-[alpha-D-Man-(1-&gt;3)-[alpha-D-Man-(1-&gt;6)]-alpha-D-Man-(1-&gt;6)]-beta-D-Man-(1-&gt;4)-beta-D-GlcNAc-(1-&gt;4)-beta-D-GlcNAc)-L-asparaginyl-[protein] (N-glucan mannose isomer 5A1,2) + 4 beta-D-mannose. The catalysed reaction is N(4)-(alpha-D-Man-(1-&gt;2)-alpha-D-Man-(1-&gt;2)-alpha-D-Man-(1-&gt;3)-[alpha-D-Man-(1-&gt;3)-[alpha-D-Man-(1-&gt;2)-alpha-D-Man-(1-&gt;6)]-alpha-D-Man-(1-&gt;6)]-beta-D-Man-(1-&gt;4)-beta-D-GlcNAc-(1-&gt;4)-beta-D-GlcNAc)-L-asparaginyl-[protein] (N-glucan mannose isomer 8A1,2,3B1,3) + 3 H2O = N(4)-(alpha-D-Man-(1-&gt;3)-[alpha-D-Man-(1-&gt;3)-[alpha-D-Man-(1-&gt;6)]-alpha-D-Man-(1-&gt;6)]-beta-D-Man-(1-&gt;4)-beta-D-GlcNAc-(1-&gt;4)-beta-D-GlcNAc)-L-asparaginyl-[protein] (N-glucan mannose isomer 5A1,2) + 3 beta-D-mannose. The protein operates within protein modification; protein glycosylation. In terms of biological role, involved in glycoprotein quality control targeting of misfolded glycoproteins for degradation. It primarily trims a single alpha-1,2-linked mannose residue from Man(9)GlcNAc(2) to produce Man(8)GlcNAc(2), but at high enzyme concentrations, as found in the ER quality control compartment (ERQC), it further trims the carbohydrates to Man(5-6)GlcNAc(2). The chain is Endoplasmic reticulum mannosyl-oligosaccharide 1,2-alpha-mannosidase (Man1b1) from Mus musculus (Mouse).